The chain runs to 224 residues: C-&gt;U-editing enzyme APOBEC-2 (224 aa).

The disordered stretch occupies residues 1–23 (MAQKEEAAEAAAPASQNGDDLEN). Zn(2+) contacts are provided by Glu-60 and His-98. The CMP/dCMP-type deaminase domain maps to 64 to 169 (GRNKTFLCYV…PEVQAALKKL (106 aa)). Glu-100 acts as the Proton donor in catalysis. Zn(2+)-binding residues include Cys-128 and Cys-131.

This sequence belongs to the cytidine and deoxycytidylate deaminase family. In terms of assembly, homotetramer. Requires Zn(2+) as cofactor. In terms of tissue distribution, expressed exclusively in heart and skeletal muscle.

The enzyme catalyses cytidine(6666) in apoB mRNA + H2O + H(+) = uridine(6666) in apoB mRNA + NH4(+). Functionally, probable C to U editing enzyme whose physiological substrate is not yet known. Does not display detectable apoB mRNA editing. Has a low intrinsic cytidine deaminase activity. May play a role in the epigenetic regulation of gene expression through the process of active DNA demethylation. The chain is C-&gt;U-editing enzyme APOBEC-2 (Apobec2) from Mus musculus (Mouse).